Reading from the N-terminus, the 699-residue chain is Protein STRUBBELIG-RECEPTOR FAMILY 5 (699 aa).

The N-terminal stretch at 1–22 (MTQKLVRLVIVSLAITVTLLQA) is a signal peptide. The Extracellular portion of the chain corresponds to 23–273 (KTDNQEVSAL…DGGGITAGTG (251 aa)). LRR repeat units follow at residues 93–115 (SLTT…LPPN), 116–136 (IANL…SLSQ), 139–161 (NLQS…FQKL), 163–186 (KLET…ANLT), and 187–209 (SLKK…RNLA). Asn-184 carries N-linked (GlcNAc...) asparagine glycosylation. Positions 239-263 (NDWSTETAPPPPPGVKYGRKSSGSK) are disordered. Residues 274 to 294 (MVIAGACLGVLVLIIVLIALV) traverse the membrane as a helical segment. Over 295 to 699 (SKKKSSLSPH…SYRAHDDYDY (405 aa)) the chain is Cytoplasmic. Ser-368 carries the post-translational modification Phosphoserine. The 272-residue stretch at 404–675 (FSPGNLLGEG…SEVVEALVRM (272 aa)) folds into the Protein kinase domain. ATP contacts are provided by residues 410 to 418 (LGEGSIGRV) and Lys-432.

This sequence belongs to the protein kinase superfamily. Ser/Thr protein kinase family. As to expression, expressed in leaves and flowers.

It localises to the membrane. The protein is Protein STRUBBELIG-RECEPTOR FAMILY 5 (SRF5) of Arabidopsis thaliana (Mouse-ear cress).